Here is a 155-residue protein sequence, read N- to C-terminus: Transcription antitermination protein NusB (155 aa).

This sequence belongs to the NusB family.

Involved in transcription antitermination. Required for transcription of ribosomal RNA (rRNA) genes. Binds specifically to the boxA antiterminator sequence of the ribosomal RNA (rrn) operons. The chain is Transcription antitermination protein NusB from Vibrio vulnificus (strain CMCP6).